We begin with the raw amino-acid sequence, 450 residues long: NADP-specific glutamate dehydrogenase (450 aa).

Lys111 is a catalytic residue.

This sequence belongs to the Glu/Leu/Phe/Val dehydrogenases family. Homohexamer.

It carries out the reaction L-glutamate + NADP(+) + H2O = 2-oxoglutarate + NH4(+) + NADPH + H(+). This chain is NADP-specific glutamate dehydrogenase (GDHA), found in Laccaria bicolor (strain S238N-H82 / ATCC MYA-4686) (Bicoloured deceiver).